A 160-amino-acid chain; its full sequence is Deoxyuridine 5'-triphosphate nucleotidohydrolase (160 aa).

Residues 76–78 (RSG), N89, and 93–95 (TID) contribute to the substrate site. Residues 139–149 (HTLSDTERGED) show a composition bias toward basic and acidic residues. Residues 139–160 (HTLSDTERGEDGFGSTGHGSHQ) form a disordered region. Over residues 150-160 (GFGSTGHGSHQ) the composition is skewed to gly residues.

The protein belongs to the dUTPase family. Mg(2+) is required as a cofactor.

The catalysed reaction is dUTP + H2O = dUMP + diphosphate + H(+). The protein operates within pyrimidine metabolism; dUMP biosynthesis; dUMP from dCTP (dUTP route): step 2/2. Its function is as follows. This enzyme is involved in nucleotide metabolism: it produces dUMP, the immediate precursor of thymidine nucleotides and it decreases the intracellular concentration of dUTP so that uracil cannot be incorporated into DNA. In Beijerinckia indica subsp. indica (strain ATCC 9039 / DSM 1715 / NCIMB 8712), this protein is Deoxyuridine 5'-triphosphate nucleotidohydrolase.